Here is a 282-residue protein sequence, read N- to C-terminus: MGMSTLTSKLESLLNRGKGTEQRLARFLLDSRDNFVAMNVAELAQAAGVSSASVIRFTRQMGYRGYSDFKVDYLSDEKQYKAESLSGSLNPYDDTEQIIAKSGQMFITAIEKSLELLDPNTMDEIAQKIVEAKRIVLFGVGTSAIVAYDIFYKLIRVNKYALFSPDLHVQLSYSSNVDADDLVIAITAKGNTPDINHMLKLANKKGCSTIVLTRFGQDEAVRLADLVLPYFYDEQLFQTGVITPQVLQMVVFDTLFFKYLTLTNEDVVLALQKEREAIIQLG.

The HTH rpiR-type domain maps to 4 to 80 (STLTSKLESL…VDYLSDEKQY (77 aa)). Residues 40–59 (VAELAQAAGVSSASVIRFTR) constitute a DNA-binding region (H-T-H motif). The SIS domain maps to 125 to 265 (IAQKIVEAKR…FFKYLTLTNE (141 aa)).

This is an uncharacterized protein from Providencia stuartii.